A 350-amino-acid polypeptide reads, in one-letter code: MSKLLKPKREVGIIGYGAYVPMYRIKAEEIGRVWGVSSFPIQEKSVPGLDEDTITIGIEAARNALKRAQIDPKLIRAIWLGTESKPYAVKPSGTVIAEAIGATPDLDAADFEFACKAGTEAIQAAIGFVGSGMADYAMAIGADTSQGRPGDHLEFTAAAGGAAYILAPKSSETLAYFEASYSYVTDTPDFWRRQHEHYPRHGNRFTGEPAYFHQIINAAKTLMEELGYTPNDFDYAVFHQPNVKFPLTAAKILGFPKEKVLPGLLSGIIGNTYSGATLVGVSAVLDIAKPGDRILWVSFGSGAGSDAFSLVVQDAIEEKRDLAPKTMDYVNRKKYIDYALYAKHRGKYIL.

E83 serves as the catalytic Proton donor/acceptor. Residue C115 is the Acyl-thioester intermediate of the active site. The (3S)-3-hydroxy-3-methylglutaryl-CoA site is built by C115 and T156. R204 lines the CoA pocket. Positions 206 and 239 each coordinate (3S)-3-hydroxy-3-methylglutaryl-CoA. H239 (proton donor/acceptor) is an active-site residue. K244 lines the CoA pocket. N271 and S301 together coordinate (3S)-3-hydroxy-3-methylglutaryl-CoA.

This sequence belongs to the thiolase-like superfamily. Archaeal HMG-CoA synthase family. Interacts with acetoacetyl-CoA thiolase that catalyzes the precedent step in the pathway and with a DUF35 protein. The acetoacetyl-CoA thiolase/HMG-CoA synthase complex channels the intermediate via a fused CoA-binding site, which allows for efficient coupling of the endergonic thiolase reaction with the exergonic HMGCS reaction.

The catalysed reaction is acetoacetyl-CoA + acetyl-CoA + H2O = (3S)-3-hydroxy-3-methylglutaryl-CoA + CoA + H(+). It participates in metabolic intermediate biosynthesis; (R)-mevalonate biosynthesis; (R)-mevalonate from acetyl-CoA: step 2/3. Functionally, catalyzes the condensation of acetyl-CoA with acetoacetyl-CoA to form 3-hydroxy-3-methylglutaryl-CoA (HMG-CoA). Functions in the mevalonate (MVA) pathway leading to isopentenyl diphosphate (IPP), a key precursor for the biosynthesis of isoprenoid compounds that are building blocks of archaeal membrane lipids. The polypeptide is Hydroxymethylglutaryl-CoA synthase (Thermococcus kodakarensis (strain ATCC BAA-918 / JCM 12380 / KOD1) (Pyrococcus kodakaraensis (strain KOD1))).